A 492-amino-acid polypeptide reads, in one-letter code: N-succinylglutamate 5-semialdehyde dehydrogenase (492 aa).

220–225 (GSSTTG) contributes to the NAD(+) binding site. Residues Glu243 and Cys277 contribute to the active site.

The protein belongs to the aldehyde dehydrogenase family. AstD subfamily.

The enzyme catalyses N-succinyl-L-glutamate 5-semialdehyde + NAD(+) + H2O = N-succinyl-L-glutamate + NADH + 2 H(+). It participates in amino-acid degradation; L-arginine degradation via AST pathway; L-glutamate and succinate from L-arginine: step 4/5. Its function is as follows. Catalyzes the NAD-dependent reduction of succinylglutamate semialdehyde into succinylglutamate. The chain is N-succinylglutamate 5-semialdehyde dehydrogenase from Klebsiella pneumoniae subsp. pneumoniae (strain ATCC 700721 / MGH 78578).